A 691-amino-acid chain; its full sequence is NADH-ubiquinone oxidoreductase 75 kDa subunit (691 aa).

Residues 1-78 (MVNVFVDGLS…NMKIFTNTPL (78 aa)) form the 2Fe-2S ferredoxin-type domain. Residues C34, C45, C48, and C62 each coordinate [2Fe-2S] cluster. In terms of domain architecture, 4Fe-4S His(Cys)3-ligated-type spans 78-117 (LVKKAREGVLEFLLVNHPLDCPICDQGGECDLQDLTMVYG). [4Fe-4S] cluster contacts are provided by H94, C98, C101, C107, C146, C149, C152, and C196. The 4Fe-4S Mo/W bis-MGD-type domain occupies 215-271 (LQSTESIDVSDAIGSNIRIDVRGSEIMRILPRLNEDVNEEWISDKARFCYDGLKRQR).

It belongs to the complex I 75 kDa subunit family. Complex I is composed of about 30 different subunits. [2Fe-2S] cluster serves as cofactor. It depends on [4Fe-4S] cluster as a cofactor.

The protein resides in the mitochondrion inner membrane. The enzyme catalyses a ubiquinone + NADH + 5 H(+)(in) = a ubiquinol + NAD(+) + 4 H(+)(out). In terms of biological role, core subunit of the mitochondrial membrane respiratory chain NADH dehydrogenase (Complex I) that is believed to belong to the minimal assembly required for catalysis. Complex I functions in the transfer of electrons from NADH to the respiratory chain. The immediate electron acceptor for the enzyme is believed to be ubiquinone. This is the largest subunit of complex I and it is a component of the iron-sulfur (IP) fragment of the enzyme. It may form part of the active site crevice where NADH is oxidized. The sequence is that of NADH-ubiquinone oxidoreductase 75 kDa subunit (NAD11) from Reclinomonas americana.